The chain runs to 594 residues: Amino-acid permease 1 (594 aa).

12 helical membrane passes run 75 to 95 (QMIA…GKSL), 101 to 121 (GSLM…ILSL), 146 to 166 (IGFA…PSEI), 181 to 201 (LNPA…NAFG), 210 to 230 (FVSS…AIII), 297 to 317 (VFYR…LVVP), 323 to 343 (LGNV…VLPH), 344 to 364 (ITNA…VFAA), 390 to 410 (PVIS…NAAP), 416 to 436 (FDWL…LSFI), 468 to 488 (YGVL…IFPV), and 498 to 518 (FFVS…SPIF). The tract at residues 550–587 (TSELSEKDLTKPNLQSNDNKNSEDLESNTPPQKKSALQ) is disordered.

The protein belongs to the amino acid-polyamine-organocation (APC) superfamily.

Its subcellular location is the membrane. This Schizosaccharomyces pombe (strain 972 / ATCC 24843) (Fission yeast) protein is Amino-acid permease 1 (aap1).